A 316-amino-acid polypeptide reads, in one-letter code: Transaldolase (316 aa).

Catalysis depends on K132, which acts as the Schiff-base intermediate with substrate.

This sequence belongs to the transaldolase family. Type 1 subfamily. As to quaternary structure, homodimer.

The protein localises to the cytoplasm. The catalysed reaction is D-sedoheptulose 7-phosphate + D-glyceraldehyde 3-phosphate = D-erythrose 4-phosphate + beta-D-fructose 6-phosphate. It functions in the pathway carbohydrate degradation; pentose phosphate pathway; D-glyceraldehyde 3-phosphate and beta-D-fructose 6-phosphate from D-ribose 5-phosphate and D-xylulose 5-phosphate (non-oxidative stage): step 2/3. Transaldolase is important for the balance of metabolites in the pentose-phosphate pathway. This chain is Transaldolase, found in Aliivibrio fischeri (strain ATCC 700601 / ES114) (Vibrio fischeri).